A 1011-amino-acid polypeptide reads, in one-letter code: SGGFDFSFLPQPPQEKAGVGLGPGPMGLMGPRGPPGASGAPGPQGFQGPAGEPGEPGQTGPAGARGPAGPPGKAGPGKPGRPGERGVVGPQGARGFPGTPGLPGFKGIRGHNGLDGLKGQPGAPGVKGEPGAPGENGTPGQTGARGLPGERGRVGAPGPAGRGSDGSVGPVGPAGPIGSAGPPGFPGAPGPKGELGPVGNTGPAGPAGPRGEQGLPGVSGPVGPPGNPGANGLTGKGAAGLPGVAGAPGLPGPRGIPGPVGASGATGARGLVGEPGPAGSKGESGGKGEPGSAGPQGPPGSSGEEGKRGNGEAGSTGPTGPPGLRGGPGSRGLPGADGRAGVIGPAGARGASGPAGVRGPSGDTGRPGEPGLMGARGLPGSPGNVGPAGKEGPVGLPGIDGRPGPIGPAGARGEAGNIGFPGPKGPAGDPGKGGEKGHAGLAGNRGAPGPDGNNGAQGPPGLQGVQGGKGEQGPAGPPGFQGLPGPAGTTGEAGKPGERGIPGEFGLPGPAGPRGERGPPGESGAVGPSGAIGSRGPSGPPGPDGNKGEPGVVGAPGTAGPAGSGGPGERGAAGIPGGKGEKGETGLRGEVGTTGRDGARGAPGAVGAPGPAGATGDRGEAGAAGPAGPAGPRGSPGERGEVGPAGPNGFAGPAGAAGQPGAKGERGTKGPKGENGIVGPTGPVGSAGPAGPNGPAGPAGSRGDGGPPGVTGFPGAAGRTGPPGPSGITGPPGPPGAAGKEGLRGPRGDQGPVGRTGETGAGGPPGFTGEKGPSGEPGTAGPPGTAGPQGLLGAPGILGLPGSRGERGLPGVAGAVGEPGPLGIGPPGARGDGLPGHKGERGYAGNAGPVGAAGAPGPHGVGPAGKHGNRGEPGPVGSVGPVGALGPRGPSGPQGIRGDKGEPGEKGPRGLPGLKGHNGLQGLPGLAGQHGDQGSPGPVGPAGPRGPAGPSGPPGKDGRTGHPGAVGPAGIRGSQGSQGPSGPPGPPGPPGPPGASGGGYDFGYEGDFYRA.

Residues serine 1–alanine 1011 are disordered. 4-hydroxyproline occurs at positions 10, 13, 35, and 41. A compositionally biased stretch (low complexity) spans leucine 28 to proline 67. Lysine 106 is subject to 5-hydroxylysine; alternate. O-linked (Gal...) hydroxylysine; alternate glycosylation is present at lysine 106. Over residues serine 167–proline 182 the composition is skewed to low complexity. Positions glycine 282 to glycine 291 are enriched in gly residues. The segment covering serine 292–serine 302 has biased composition (low complexity). Positions glycine 323–glycine 332 are enriched in gly residues. The span at proline 345–serine 361 shows a compositional bias: low complexity. Proline 367 and proline 370 each carry 4-hydroxyproline. Low complexity predominate over residues leucine 396–alanine 415. A compositionally biased stretch (gly residues) spans glycine 464–glycine 473. Low complexity-rich tracts occupy residues proline 520–proline 537 and glutamate 549–alanine 559. Residues glycine 560–glycine 578 show a composition bias toward gly residues. Low complexity-rich tracts occupy residues arginine 588–serine 635 and valine 642–alanine 662. Residues lysine 663–lysine 672 are compositionally biased toward basic and acidic residues. Residues proline 680–alanine 690 show a composition bias toward low complexity. The span at glycine 700–glycine 709 shows a compositional bias: gly residues. Low complexity predominate over residues threonine 711–threonine 720. The span at glycine 757–glycine 766 shows a compositional bias: gly residues. Low complexity-rich tracts occupy residues serine 774–proline 801 and leucine 809–proline 819. The span at glycine 820–leucine 834 shows a compositional bias: gly residues. Low complexity-rich tracts occupy residues tyrosine 843–proline 856 and glutamate 872–proline 887. Residues arginine 897–proline 908 show a composition bias toward basic and acidic residues. Pro residues predominate over residues serine 981 to proline 993.

It belongs to the fibrillar collagen family. Trimers of one alpha 2(I) and two alpha 1(I) chains. Interacts (via C-terminus) with TMEM131 (via PapD-L domain); the interaction is direct and is involved in assembly and TRAPPIII ER-to-Golgi transport complex-dependent secretion of collagen. Prolines at the third position of the tripeptide repeating unit (G-X-Y) are hydroxylated in some or all of the chains. As to expression, expressed in bones.

It is found in the secreted. The protein resides in the extracellular space. It localises to the extracellular matrix. Type I collagen is a member of group I collagen (fibrillar forming collagen). This Neocnus comes (Miller's Hispaniolan ground sloth) protein is Collagen alpha-2(I) chain.